The chain runs to 274 residues: Dermonecrotic toxin SdSicTox-betaIIB1bix (274 aa).

Histidine 5 is an active-site residue. Glutamate 25 and aspartate 27 together coordinate Mg(2+). The active-site Nucleophile is the histidine 41. 2 cysteine pairs are disulfide-bonded: cysteine 45/cysteine 51 and cysteine 47/cysteine 190. Residue aspartate 85 participates in Mg(2+) binding.

This sequence belongs to the arthropod phospholipase D family. Class II subfamily. It depends on Mg(2+) as a cofactor. In terms of tissue distribution, expressed by the venom gland.

It is found in the secreted. It catalyses the reaction an N-(acyl)-sphingosylphosphocholine = an N-(acyl)-sphingosyl-1,3-cyclic phosphate + choline. The enzyme catalyses an N-(acyl)-sphingosylphosphoethanolamine = an N-(acyl)-sphingosyl-1,3-cyclic phosphate + ethanolamine. The catalysed reaction is a 1-acyl-sn-glycero-3-phosphocholine = a 1-acyl-sn-glycero-2,3-cyclic phosphate + choline. It carries out the reaction a 1-acyl-sn-glycero-3-phosphoethanolamine = a 1-acyl-sn-glycero-2,3-cyclic phosphate + ethanolamine. In terms of biological role, dermonecrotic toxins cleave the phosphodiester linkage between the phosphate and headgroup of certain phospholipids (sphingolipid and lysolipid substrates), forming an alcohol (often choline) and a cyclic phosphate. This toxin acts on sphingomyelin (SM). It may also act on ceramide phosphoethanolamine (CPE), lysophosphatidylcholine (LPC) and lysophosphatidylethanolamine (LPE), but not on lysophosphatidylserine (LPS), and lysophosphatidylglycerol (LPG). It acts by transphosphatidylation, releasing exclusively cyclic phosphate products as second products. Induces dermonecrosis, hemolysis, increased vascular permeability, edema, inflammatory response, and platelet aggregation. The polypeptide is Dermonecrotic toxin SdSicTox-betaIIB1bix (Sicarius cf. damarensis (strain GJB-2008) (Six-eyed sand spider)).